The chain runs to 364 residues: Nucleoside ABC transporter permease protein NupB (364 aa).

A run of 8 helical transmembrane segments spans residues 9 to 29, 77 to 99, 105 to 125, 138 to 158, 195 to 215, 244 to 264, 284 to 304, and 326 to 346; these read LVPLIAIVFGFLLGAIIMLAF, FNIGMSGQALAGWISSMWFALSF, LLMIPLVVIIGMVFGAFMGFI, VITTIMLNYIMLFFSTFMIHS, TLNIGLIIAIIALVIMAIIFT, LILSMVVAGALAGLGGVVYGF, MAVALLGGNSPIGILFAALLF, and VVTAAIIFFIAVKFIIEVMLP.

It belongs to the binding-protein-dependent transport system permease family. The complex is composed of two ATP-binding proteins (NupA), two transmembrane proteins (NupB and NupC) and a solute-binding protein (BmpA).

Its subcellular location is the cell membrane. Part of an ABC transporter complex involved in the uptake of all common nucleosides. Responsible for the translocation of the substrate across the membrane. This Lactococcus lactis subsp. cremoris (strain MG1363) protein is Nucleoside ABC transporter permease protein NupB.